Consider the following 204-residue polypeptide: Thiamine-phosphate synthase (204 aa).

Residues 32-36 (QLRMK) and D64 each bind 4-amino-2-methyl-5-(diphosphooxymethyl)pyrimidine. Mg(2+) is bound by residues D65 and D84. A 4-amino-2-methyl-5-(diphosphooxymethyl)pyrimidine-binding site is contributed by T103. 129–131 (TTT) is a binding site for 2-[(2R,5Z)-2-carboxy-4-methylthiazol-5(2H)-ylidene]ethyl phosphate. Residue K132 participates in 4-amino-2-methyl-5-(diphosphooxymethyl)pyrimidine binding. Residue G165 coordinates 2-[(2R,5Z)-2-carboxy-4-methylthiazol-5(2H)-ylidene]ethyl phosphate.

This sequence belongs to the thiamine-phosphate synthase family. Mg(2+) is required as a cofactor.

The catalysed reaction is 2-[(2R,5Z)-2-carboxy-4-methylthiazol-5(2H)-ylidene]ethyl phosphate + 4-amino-2-methyl-5-(diphosphooxymethyl)pyrimidine + 2 H(+) = thiamine phosphate + CO2 + diphosphate. The enzyme catalyses 2-(2-carboxy-4-methylthiazol-5-yl)ethyl phosphate + 4-amino-2-methyl-5-(diphosphooxymethyl)pyrimidine + 2 H(+) = thiamine phosphate + CO2 + diphosphate. It catalyses the reaction 4-methyl-5-(2-phosphooxyethyl)-thiazole + 4-amino-2-methyl-5-(diphosphooxymethyl)pyrimidine + H(+) = thiamine phosphate + diphosphate. The protein operates within cofactor biosynthesis; thiamine diphosphate biosynthesis; thiamine phosphate from 4-amino-2-methyl-5-diphosphomethylpyrimidine and 4-methyl-5-(2-phosphoethyl)-thiazole: step 1/1. Its function is as follows. Condenses 4-methyl-5-(beta-hydroxyethyl)thiazole monophosphate (THZ-P) and 2-methyl-4-amino-5-hydroxymethyl pyrimidine pyrophosphate (HMP-PP) to form thiamine monophosphate (TMP). This Bacteroides fragilis (strain YCH46) protein is Thiamine-phosphate synthase.